Reading from the N-terminus, the 252-residue chain is Ribosomal RNA small subunit methyltransferase J (252 aa).

Residues 101–102 (RD), 117–118 (ER), 153–154 (SS), and Asp171 contribute to the S-adenosyl-L-methionine site.

The protein belongs to the methyltransferase superfamily. RsmJ family.

The protein localises to the cytoplasm. It carries out the reaction guanosine(1516) in 16S rRNA + S-adenosyl-L-methionine = N(2)-methylguanosine(1516) in 16S rRNA + S-adenosyl-L-homocysteine + H(+). Functionally, specifically methylates the guanosine in position 1516 of 16S rRNA. This is Ribosomal RNA small subunit methyltransferase J from Salmonella schwarzengrund (strain CVM19633).